The primary structure comprises 274 residues: uncharacterized protein (274 aa).

104–111 is a binding site for ATP; the sequence is GVFAIGKS.

This is an uncharacterized protein from Mycoplasma genitalium (strain ATCC 33530 / DSM 19775 / NCTC 10195 / G37) (Mycoplasmoides genitalium).